The following is a 694-amino-acid chain: Ribonuclease R (694 aa).

One can recognise an RNB domain in the interval 204–525; it reads RKDLRDLLCF…IVHRLLFHPL (322 aa). The S1 motif domain occupies 571–648; it reads ATLYKAFIIT…LTQSIEWTLV (78 aa). Positions 652-694 are disordered; it reads TKAKAKRTSKKKKTESVTTKEKKKSPAKKKKGATKTKKGSGKN. Basic residues-rich tracts occupy residues 654–664 and 672–694; these read AKAKRTSKKKK and EKKKSPAKKKKGATKTKKGSGKN.

It belongs to the RNR ribonuclease family. RNase R subfamily.

It is found in the cytoplasm. It carries out the reaction Exonucleolytic cleavage in the 3'- to 5'-direction to yield nucleoside 5'-phosphates.. Functionally, 3'-5' exoribonuclease that releases 5'-nucleoside monophosphates and is involved in maturation of structured RNAs. The protein is Ribonuclease R of Chlamydia trachomatis serovar D (strain ATCC VR-885 / DSM 19411 / UW-3/Cx).